The sequence spans 390 residues: Ribosomal RNA large subunit methyltransferase G (390 aa).

Belongs to the methyltransferase superfamily. RlmG family.

Its subcellular location is the cytoplasm. It carries out the reaction guanosine(1835) in 23S rRNA + S-adenosyl-L-methionine = N(2)-methylguanosine(1835) in 23S rRNA + S-adenosyl-L-homocysteine + H(+). Specifically methylates the guanine in position 1835 (m2G1835) of 23S rRNA. The sequence is that of Ribosomal RNA large subunit methyltransferase G from Alcanivorax borkumensis (strain ATCC 700651 / DSM 11573 / NCIMB 13689 / SK2).